The sequence spans 30 residues: Varv peptide H (30 aa).

A cross-link (cyclopeptide (Gly-Asn)) is located at residues 1 to 30 (GLPVCGETCFGGTCNTPGCSCETWPVCSRN). Intrachain disulfides connect Cys-5–Cys-19, Cys-9–Cys-21, and Cys-14–Cys-27.

Post-translationally, this is a cyclic peptide.

Its function is as follows. Probably participates in a plant defense mechanism. This Viola arvensis (European field pansy) protein is Varv peptide H.